The primary structure comprises 141 residues: Cystatin-13 (141 aa).

Positions 1–24 are cleaved as a signal peptide; the sequence is MARFLQTLLFLVIMVEFVSRRVEA. The interval 76–80 is secondary area of contact; the sequence is QITDS. 2 disulfides stabilise this stretch: C94–C104 and C118–C138.

It belongs to the cystatin family. In terms of tissue distribution, expressed exclusively in testis. Found in spermatagonia, spermatocytes, round spermatids, elongating spermatids and spermatozoa.

It is found in the secreted. It localises to the cytoplasm. May perform a specialized role during sperm development and maturation. The sequence is that of Cystatin-13 from Mus musculus (Mouse).